The following is a 93-amino-acid chain: Small ribosomal subunit protein uS19 (93 aa).

It belongs to the universal ribosomal protein uS19 family.

Protein S19 forms a complex with S13 that binds strongly to the 16S ribosomal RNA. The protein is Small ribosomal subunit protein uS19 of Campylobacter lari (strain RM2100 / D67 / ATCC BAA-1060).